The primary structure comprises 341 residues: GDP-fucose transporter 1 (341 aa).

Transmembrane regions (helical) follow at residues 17-37 (LVIGYALCSSLLAVINKLAIT), 41-61 (YPGLLTALQYLTCTVAVYLLG), 71-91 (FTWDTAKKFLPAAIVFYLAIF), 103-123 (DTFIVFRSLTPLLVAIADTVF), 132-152 (LTFLSLVVILAGAVGYVATDS), 156-176 (LTAYSWALAYLVTITTEMVYI), 187-207 (IWGLVLYNNLLSLMIAPVFWF), 231-251 (AFSSVAASCVFGFLISYFGFA), 260-280 (AFTVTGVVNKFLTVVINVLIW), and 283-303 (HATPVGLVCLLFTICGGVGYQ). Positions 316–341 (SEKDSEKGEEDEELTQLVPGKLASVV) are disordered.

This sequence belongs to the nucleotide-sugar transporter family. GDP-Mannose:GMP antiporter (GMA) (TC 2.A.7.13) subfamily. Ubiquitous.

The protein resides in the golgi apparatus membrane. Its function is as follows. Acts as the major nucleotide-sugar transporter for the import of GDP-Fucose into the Golgi lumen. Transports GDP-Fucose in a strict counter-exchange mode. Is required for proper plant growth and development. Also acts as a GDP-mannose transporter that may be involved in the import of GDP-mannose from the cytoplasm into the Golgi lumen. This is GDP-fucose transporter 1 from Arabidopsis thaliana (Mouse-ear cress).